The sequence spans 225 residues: Testis-expressed protein 30 (225 aa).

The polypeptide is Testis-expressed protein 30 (Tex30) (Mus musculus (Mouse)).